Reading from the N-terminus, the 154-residue chain is OCIA domain-containing protein 2 (154 aa).

Residues 1 to 22 (MASASARGNQDKDAHFPPPSKQ) form a disordered region. Residues 1–120 (MASASARGNQ…HFFEDQLRGA (120 aa)) enclose the OCIA domain. Lys-41 is modified (N6-acetyllysine).

In terms of assembly, interacts (via OCIA domain) with OCIAD1/ASRIJ and STAT3.

It is found in the endosome. It localises to the mitochondrion. The protein resides in the mitochondrion inner membrane. In terms of biological role, has an essential role in the assembly of mitochondrial respiratory chain complex III. Is also required for STAT3 activation and plays a role in cell migration. The sequence is that of OCIA domain-containing protein 2 (OCIAD2) from Homo sapiens (Human).